A 706-amino-acid polypeptide reads, in one-letter code: Triadin (706 aa).

The interval 1 to 28 (MTEITAEGNASTTTTVIDSKNGSVPKSP) is disordered. Residues 1 to 47 (MTEITAEGNASTTTTVIDSKNGSVPKSPGKVLKRTVTEDLVTTFSSP) are Cytoplasmic-facing. Over residues 8 to 24 (GNASTTTTVIDSKNGSV) the composition is skewed to polar residues. The chain crosses the membrane as a helical span at residues 48–68 (AAWLLVIALIITWSAVAVVMF). Over 69-706 (DLVDYKNFSA…GKPNSPGPKQ (638 aa)) the chain is Lumenal. N-linked (GlcNAc...) asparagine glycosylation is present at Asn-75. Over residues 117–127 (DGDEEDDEGDE) the composition is skewed to acidic residues. 3 disordered regions span residues 117–265 (DGDE…EQKD), 281–663 (DLKP…KKQK), and 684–706 (FPVT…GPKQ). 7 stretches are compositionally biased toward basic and acidic residues: residues 128–254 (DTAK…ESKE), 309–358 (PEEK…KSPD), 372–432 (TKKD…KEEV), 443–518 (AKKE…EVKP), 525–552 (IKKE…EKVL), 570–588 (KKAE…DKPK), and 599–621 (ESGK…RESH). Residue Asn-625 is glycosylated (N-linked (GlcNAc...) asparagine). The segment covering 628–651 (KAEKPARGSKEGFEDVPASKKAKE) has biased composition (basic and acidic residues).

As to quaternary structure, interacts with CASQ2. Homooligomer of variable subunit number; disulfide-linked. Interacts with CASQ1 and RYR1 in skeletal muscle. Phosphorylated by CaMK2. In terms of processing, N-glycosylated. In terms of tissue distribution, detected in skeletal muscle and in heart (at protein level). Detected in skeletal muscle and in heart.

The protein resides in the sarcoplasmic reticulum membrane. Functionally, contributes to the regulation of lumenal Ca2+ release via the sarcoplasmic reticulum calcium release channels RYR1 and RYR2, a key step in triggering skeletal and heart muscle contraction. Required for normal organization of the triad junction, where T-tubules and the sarcoplasmic reticulum terminal cisternae are in close contact. Required for normal skeletal muscle strength. Plays a role in excitation-contraction coupling in the heart and in regulating the rate of heart beats. This Oryctolagus cuniculus (Rabbit) protein is Triadin (TRDN).